A 192-amino-acid chain; its full sequence is Peptidyl-tRNA hydrolase (192 aa).

Y14 lines the tRNA pocket. H19 acts as the Proton acceptor in catalysis. Residues Y64, N66, and N112 each coordinate tRNA.

It belongs to the PTH family. Monomer.

The protein resides in the cytoplasm. The enzyme catalyses an N-acyl-L-alpha-aminoacyl-tRNA + H2O = an N-acyl-L-amino acid + a tRNA + H(+). Functionally, hydrolyzes ribosome-free peptidyl-tRNAs (with 1 or more amino acids incorporated), which drop off the ribosome during protein synthesis, or as a result of ribosome stalling. Its function is as follows. Catalyzes the release of premature peptidyl moieties from peptidyl-tRNA molecules trapped in stalled 50S ribosomal subunits, and thus maintains levels of free tRNAs and 50S ribosomes. This Prosthecochloris aestuarii (strain DSM 271 / SK 413) protein is Peptidyl-tRNA hydrolase.